Consider the following 207-residue polypeptide: Ras-related protein Rab7 (207 aa).

Residues 15 to 22, 63 to 67, and 125 to 128 each bind GTP; these read GDSGVGKT, DTAGQ, and NKID. Residues Cys205 and Cys207 are each lipidated (S-geranylgeranyl cysteine). Position 207 is a cysteine methyl ester (Cys207).

The protein belongs to the small GTPase superfamily. Rab family.

It localises to the cell membrane. Functionally, protein transport. Probably involved in vesicular traffic. This Prunus armeniaca (Apricot) protein is Ras-related protein Rab7.